Consider the following 338-residue polypeptide: Anthranilate phosphoribosyltransferase (338 aa).

Residues Gly-78, Gly-81 to Asp-82, Thr-86, Asn-88 to Thr-91, Lys-106 to Ser-114, and Ser-118 contribute to the 5-phospho-alpha-D-ribose 1-diphosphate site. Gly-78 is a binding site for anthranilate. A Mg(2+)-binding site is contributed by Ser-90. Asn-109 provides a ligand contact to anthranilate. Arg-164 contacts anthranilate. Residues Asp-223 and Glu-224 each coordinate Mg(2+).

The protein belongs to the anthranilate phosphoribosyltransferase family. In terms of assembly, homodimer. Mg(2+) serves as cofactor.

It carries out the reaction N-(5-phospho-beta-D-ribosyl)anthranilate + diphosphate = 5-phospho-alpha-D-ribose 1-diphosphate + anthranilate. Its pathway is amino-acid biosynthesis; L-tryptophan biosynthesis; L-tryptophan from chorismate: step 2/5. Functionally, catalyzes the transfer of the phosphoribosyl group of 5-phosphorylribose-1-pyrophosphate (PRPP) to anthranilate to yield N-(5'-phosphoribosyl)-anthranilate (PRA). In Bacillus velezensis (strain DSM 23117 / BGSC 10A6 / LMG 26770 / FZB42) (Bacillus amyloliquefaciens subsp. plantarum), this protein is Anthranilate phosphoribosyltransferase.